Reading from the N-terminus, the 424-residue chain is CinA-like protein (424 aa).

It belongs to the CinA family.

This chain is CinA-like protein, found in Shewanella putrefaciens (strain CN-32 / ATCC BAA-453).